The chain runs to 92 residues: C-C motif chemokine 4 (92 aa).

Positions 1-23 (MKLCVTVLSLLMLVAAFCSPALS) are cleaved as a signal peptide. Disulfide bonds link C34–C58 and C35–C74.

It belongs to the intercrine beta (chemokine CC) family. In terms of assembly, homodimer and heterodimer of MIP-1-alpha(4-69) and MIP-1-beta(3-69). In terms of processing, N-terminal processed form MIP-1-beta(3-69) is produced by proteolytic cleavage after secretion from peripheral blood lymphocytes.

The protein resides in the secreted. Functionally, monokine with inflammatory and chemokinetic properties. Binds to CCR5. One of the major HIV-suppressive factors produced by CD8+ T-cells. Recombinant MIP-1-beta induces a dose-dependent inhibition of different strains of HIV-1, HIV-2, and simian immunodeficiency virus (SIV). The processed form MIP-1-beta(3-69) retains the abilities to induce down-modulation of surface expression of the chemokine receptor CCR5 and to inhibit the CCR5-mediated entry of HIV-1 in T-cells. MIP-1-beta(3-69) is also a ligand for CCR1 and CCR2 isoform B. The sequence is that of C-C motif chemokine 4 (CCL4) from Homo sapiens (Human).